The following is a 55-amino-acid chain: U-reduvitoxin-Pr2a (55 aa).

An N-terminal signal peptide occupies residues 1–21; that stretch reads MMKFLLVLFLITITLITMAYS. 3 cysteine pairs are disulfide-bonded: Cys26–Cys41, Cys33–Cys46, and Cys40–Cys51.

This sequence belongs to the venom Ptu1-like knottin family. In terms of tissue distribution, expressed by the venom gland (posterior main gland) (at protein level).

It localises to the secreted. Its function is as follows. Binds reversibly and blocks P/Q-type voltage-gated calcium channels (Cav). The protein is U-reduvitoxin-Pr2a of Platymeris rhadamanthus (Red spot assassin bug).